Here is a 507-residue protein sequence, read N- to C-terminus: Beta-glucosidase 12 (507 aa).

The N-terminal stretch at 1-22 is a signal peptide; sequence MRTIYLSLLVFIIVLALNEVMA. Glutamine 50 lines the a beta-D-glucoside pocket. An N-linked (GlcNAc...) asparagine glycan is attached at asparagine 81. A beta-D-glucoside contacts are provided by residues histidine 154 and 199–200; that span reads NE. The active-site Proton donor is the glutamate 200. A disulfide bridge connects residues cysteine 219 and cysteine 227. A glycan (N-linked (GlcNAc...) asparagine) is linked at asparagine 226. A beta-D-glucoside is bound at residue tyrosine 344. Residue asparagine 358 is glycosylated (N-linked (GlcNAc...) asparagine). A beta-D-glucoside contacts are provided by residues glutamate 414, tryptophan 459, 466–467, and phenylalanine 475; that span reads EW. The Nucleophile role is filled by glutamate 414.

Belongs to the glycosyl hydrolase 1 family.

It carries out the reaction Hydrolysis of terminal, non-reducing beta-D-glucosyl residues with release of beta-D-glucose.. This is Beta-glucosidase 12 from Arabidopsis thaliana (Mouse-ear cress).